Consider the following 385-residue polypeptide: GPN-loop GTPase 1 (385 aa).

G13–T18 is a GTP binding site. The short motif at G70–N72 is the Gly-Pro-Asn (GPN)-loop; involved in dimer interface element. Position 173–176 (N173–D176) interacts with GTP. A phosphoserine mark is found at S304, S308, and S313. The span at E317–V332 shows a compositional bias: acidic residues. The tract at residues E317 to L356 is disordered. The span at E333–V348 shows a compositional bias: basic and acidic residues. Residue S352 is modified to Phosphoserine. A Glycyl lysine isopeptide (Lys-Gly) (interchain with G-Cter in ubiquitin) cross-link involves residue K369.

Belongs to the GPN-loop GTPase family. Heterodimers with GPN2 or GPN3. Binds to RNA polymerase II (RNAPII) in a GTP-dependent manner. Interacts with nuclear pore protein NUP133 and nuclear export factor CRM1. Interacts with PCL1. Post-translationally, phosphorylated by the cyclin-CDK PCL1-PHO85.

The protein localises to the cytoplasm. Its function is as follows. Small GTPase required for proper nuclear import of RNA polymerase II (RNAPII). May act at an RNAP assembly step prior to nuclear import. Promotes sister chromatid separation during anaphase. This Saccharomyces cerevisiae (strain ATCC 204508 / S288c) (Baker's yeast) protein is GPN-loop GTPase 1.